Here is a 100-residue protein sequence, read N- to C-terminus: Enhancer of yellow 2 transcription factor (100 aa).

Belongs to the ENY2 family. In terms of assembly, component of the nuclear pore complex (NPC)-associated AMEX complex (anchoring and mRNA export complex), composed of at least e(y)2 and xmas-2. Component of the SAGA transcription coactivator-HAT complexes, at least composed of Ada2b, e(y)2, Pcaf/Gcn5, Taf10 and Nipped-A/Trrap. Within the SAGA complex, e(y)2, Sgf11, and not/nonstop form an additional subcomplex of SAGA called the DUB module (deubiquitination module). Component of the THO complex, composed of at least e(y)2, HPR1, THO2, THOC5, THOC6 and THOC7. Interacts with e(y)1. Interacts with su(Hw) (via zinc fingers). Interacts with xmas-2; required for localization to the nuclear periphery. Interacts with the nuclear pore complex (NPC).

The protein localises to the nucleus. It is found in the nucleoplasm. Its subcellular location is the cytoplasm. Its function is as follows. Involved in mRNA export coupled transcription activation by association with both the AMEX and the SAGA complexes. The SAGA complex is a multiprotein complex that activates transcription by remodeling chromatin and mediating histone acetylation and deubiquitination. Within the SAGA complex, participates in a subcomplex that specifically deubiquitinates histone H2B. The SAGA complex is recruited to specific gene promoters by activators, where it is required for transcription. Required for nuclear receptor-mediated transactivation. Involved in transcription elongation by recruiting the THO complex onto nascent mRNA. The AMEX complex functions in docking export-competent ribonucleoprotein particles (mRNPs) to the nuclear entrance of the nuclear pore complex (nuclear basket). AMEX participates in mRNA export and accurate chromatin positioning in the nucleus by tethering genes to the nuclear periphery. In Drosophila pseudoobscura pseudoobscura (Fruit fly), this protein is Enhancer of yellow 2 transcription factor.